A 231-amino-acid chain; its full sequence is MARRPRPDGPQHLLALVRSAVPPVHPAGRPFIAAGLAIAAVGHRYRWLRGTGLLAAAACAGFFRHPQRVPPTRPAAIVAPADGVICAIDSAAPPAELSMGDTPLPRVSIFLSILDAHVQRAPVSGEVIAVQHRPGRFGSADLPEASDDNERTSVRIRMPNGAEVVAVQIAGLVARRIVCDAHVGDKLAIGDTYGLIRFGSRLDTYLPAGAEPIVNVGQRAVAGETVLAECR.

S200 serves as the catalytic Schiff-base intermediate with substrate; via pyruvic acid. Residue S200 is modified to Pyruvic acid (Ser); by autocatalysis.

Belongs to the phosphatidylserine decarboxylase family. PSD-A subfamily. Heterodimer of a large membrane-associated beta subunit and a small pyruvoyl-containing alpha subunit. The cofactor is pyruvate. In terms of processing, is synthesized initially as an inactive proenzyme. Formation of the active enzyme involves a self-maturation process in which the active site pyruvoyl group is generated from an internal serine residue via an autocatalytic post-translational modification. Two non-identical subunits are generated from the proenzyme in this reaction, and the pyruvate is formed at the N-terminus of the alpha chain, which is derived from the carboxyl end of the proenzyme. The post-translation cleavage follows an unusual pathway, termed non-hydrolytic serinolysis, in which the side chain hydroxyl group of the serine supplies its oxygen atom to form the C-terminus of the beta chain, while the remainder of the serine residue undergoes an oxidative deamination to produce ammonia and the pyruvoyl prosthetic group on the alpha chain.

The protein resides in the cell membrane. The catalysed reaction is a 1,2-diacyl-sn-glycero-3-phospho-L-serine + H(+) = a 1,2-diacyl-sn-glycero-3-phosphoethanolamine + CO2. It functions in the pathway phospholipid metabolism; phosphatidylethanolamine biosynthesis; phosphatidylethanolamine from CDP-diacylglycerol: step 2/2. Catalyzes the formation of phosphatidylethanolamine (PtdEtn) from phosphatidylserine (PtdSer). The protein is Phosphatidylserine decarboxylase proenzyme of Mycobacterium tuberculosis (strain ATCC 25177 / H37Ra).